The following is a 249-amino-acid chain: DNA polymerase sliding clamp (249 aa).

Belongs to the PCNA family. As to quaternary structure, homotrimer. The subunits circularize to form a toroid; DNA passes through its center. Replication factor C (RFC) is required to load the toroid on the DNA.

Its function is as follows. Sliding clamp subunit that acts as a moving platform for DNA processing. Responsible for tethering the catalytic subunit of DNA polymerase and other proteins to DNA during high-speed replication. The chain is DNA polymerase sliding clamp from Nanoarchaeum equitans (strain Kin4-M).